Consider the following 370-residue polypeptide: DNA replication and repair protein RecF (370 aa).

ATP is bound at residue 33–40 (GPNAAGKT).

The protein belongs to the RecF family.

The protein resides in the cytoplasm. The RecF protein is involved in DNA metabolism; it is required for DNA replication and normal SOS inducibility. RecF binds preferentially to single-stranded, linear DNA. It also seems to bind ATP. This is DNA replication and repair protein RecF from Moorella thermoacetica (strain ATCC 39073 / JCM 9320).